A 248-amino-acid chain; its full sequence is Polyhedrin (248 aa).

The N-terminal stretch at 1–27 is a signal peptide; that stretch reads MADVAGTSNRDFRGREQRLFNSEQYNY. Asparagine 28, asparagine 77, asparagine 86, and asparagine 237 each carry an N-linked (GlcNAc...) asparagine; by host glycan.

Its subcellular location is the host cytoplasm. Functionally, major component of the virus occlusion bodies, which are large proteinaceous structures (polyhedra), that protect the virus from the outside environment for extended periods until they are ingested by insect larvae. This Bombyx mori cytoplasmic polyhedrosis virus (BmCPV) protein is Polyhedrin.